Reading from the N-terminus, the 713-residue chain is Topoisomerase subunit TopoM (713 aa).

A Topo IIA-type catalytic domain is found at 41–504 (IPSAYDGLKP…DATPVSRGDE (464 aa)). Tyr128 acts as the O-(5'-phospho-DNA)-tyrosine intermediate in catalysis. The interval 694 to 713 (NRAKASIKGSGADVTPAPAE) is disordered.

This sequence belongs to the type II topoisomerase GyrA/ParC subunit family. In terms of assembly, a complex of TopoN and TopoM, possibly a heterotetramer. It depends on Mg(2+) as a cofactor.

It catalyses the reaction ATP-dependent breakage, passage and rejoining of double-stranded DNA.. Inhibited by quinolone antibiotic ciprofloxacin and coumarin antibiotic novobiocin, but at much higher concentrations than is usual for DNA gyrase/topoisomerase. Functionally, catalyzes the relaxation of negatively supercoiled DNA in the presence of ATP or dATP but not other nucleotides. Individual subunits have no activity. Not able to negatively supercoil DNA, it can however introduce positive supercoils in DNA. Relaxes positive supercoils in an ATP-dependent manner. Catenates and decatenates DNA. Generates dsDNA breaks in the presence of the quinolone antibiotic ciprofloxacin, showing it is a topoisomerase. The protein is Topoisomerase subunit TopoM of Mycolicibacterium smegmatis (strain ATCC 700084 / mc(2)155) (Mycobacterium smegmatis).